The chain runs to 199 residues: Protein P1 (199 aa).

The sequence is that of Protein P1 from Rice tungro bacilliform virus (isolate Philippines) (RTBV).